The sequence spans 309 residues: 4-hydroxy-3-methylbut-2-enyl diphosphate reductase (309 aa).

Cysteine 12 lines the [4Fe-4S] cluster pocket. The (2E)-4-hydroxy-3-methylbut-2-enyl diphosphate site is built by histidine 41 and histidine 74. Residues histidine 41 and histidine 74 each coordinate dimethylallyl diphosphate. Residues histidine 41 and histidine 74 each coordinate isopentenyl diphosphate. Cysteine 96 contacts [4Fe-4S] cluster. Histidine 124 is a (2E)-4-hydroxy-3-methylbut-2-enyl diphosphate binding site. Histidine 124 contacts dimethylallyl diphosphate. Histidine 124 contributes to the isopentenyl diphosphate binding site. The active-site Proton donor is glutamate 126. Threonine 167 contributes to the (2E)-4-hydroxy-3-methylbut-2-enyl diphosphate binding site. Cysteine 197 contacts [4Fe-4S] cluster. Serine 225, serine 226, asparagine 227, and serine 269 together coordinate (2E)-4-hydroxy-3-methylbut-2-enyl diphosphate. 4 residues coordinate dimethylallyl diphosphate: serine 225, serine 226, asparagine 227, and serine 269. Isopentenyl diphosphate contacts are provided by serine 225, serine 226, asparagine 227, and serine 269.

The protein belongs to the IspH family. It depends on [4Fe-4S] cluster as a cofactor.

It catalyses the reaction isopentenyl diphosphate + 2 oxidized [2Fe-2S]-[ferredoxin] + H2O = (2E)-4-hydroxy-3-methylbut-2-enyl diphosphate + 2 reduced [2Fe-2S]-[ferredoxin] + 2 H(+). The enzyme catalyses dimethylallyl diphosphate + 2 oxidized [2Fe-2S]-[ferredoxin] + H2O = (2E)-4-hydroxy-3-methylbut-2-enyl diphosphate + 2 reduced [2Fe-2S]-[ferredoxin] + 2 H(+). It functions in the pathway isoprenoid biosynthesis; dimethylallyl diphosphate biosynthesis; dimethylallyl diphosphate from (2E)-4-hydroxy-3-methylbutenyl diphosphate: step 1/1. The protein operates within isoprenoid biosynthesis; isopentenyl diphosphate biosynthesis via DXP pathway; isopentenyl diphosphate from 1-deoxy-D-xylulose 5-phosphate: step 6/6. Functionally, catalyzes the conversion of 1-hydroxy-2-methyl-2-(E)-butenyl 4-diphosphate (HMBPP) into a mixture of isopentenyl diphosphate (IPP) and dimethylallyl diphosphate (DMAPP). Acts in the terminal step of the DOXP/MEP pathway for isoprenoid precursor biosynthesis. The protein is 4-hydroxy-3-methylbut-2-enyl diphosphate reductase of Colwellia psychrerythraea (strain 34H / ATCC BAA-681) (Vibrio psychroerythus).